Here is a 180-residue protein sequence, read N- to C-terminus: Major urinary protein 1 (180 aa).

An N-terminal signal peptide occupies residues 1–18 (MKMLLLLCLGLTLVCVHA). Cysteine 82 and cysteine 175 are disulfide-bonded.

Belongs to the calycin superfamily. Lipocalin family. In terms of tissue distribution, abundant in the urine of adult male mice but absent from that of females.

It localises to the secreted. Binds pheromones that are released from drying urine of males. These pheromones affect the sexual behavior of females. The chain is Major urinary protein 1 (Mup1) from Mus musculus (Mouse).